We begin with the raw amino-acid sequence, 299 residues long: Phosphoribosylaminoimidazole-succinocarboxamide synthase (299 aa).

Residues 259-279 (PESGWDRKSEQPPPPLPQHVV) form a disordered region.

It belongs to the SAICAR synthetase family.

It catalyses the reaction 5-amino-1-(5-phospho-D-ribosyl)imidazole-4-carboxylate + L-aspartate + ATP = (2S)-2-[5-amino-1-(5-phospho-beta-D-ribosyl)imidazole-4-carboxamido]succinate + ADP + phosphate + 2 H(+). It functions in the pathway purine metabolism; IMP biosynthesis via de novo pathway; 5-amino-1-(5-phospho-D-ribosyl)imidazole-4-carboxamide from 5-amino-1-(5-phospho-D-ribosyl)imidazole-4-carboxylate: step 1/2. This is Phosphoribosylaminoimidazole-succinocarboxamide synthase from Streptomyces avermitilis (strain ATCC 31267 / DSM 46492 / JCM 5070 / NBRC 14893 / NCIMB 12804 / NRRL 8165 / MA-4680).